A 420-amino-acid chain; its full sequence is 5'-deoxyadenosine deaminase (420 aa).

Residues His55 and His57 each contribute to the Zn(2+) site. Residues Glu84 and His176 each contribute to the substrate site. His203 serves as a coordination point for Zn(2+). Residues Glu206 and Asp292 each coordinate substrate. Asp292 lines the Zn(2+) pocket.

It belongs to the metallo-dependent hydrolases superfamily. MTA/SAH deaminase family. In terms of assembly, homotetramer. Zn(2+) is required as a cofactor.

The catalysed reaction is 5'-deoxyadenosine + H2O + H(+) = 5'-deoxyinosine + NH4(+). The enzyme catalyses S-adenosyl-L-homocysteine + H2O + H(+) = S-inosyl-L-homocysteine + NH4(+). It catalyses the reaction S-methyl-5'-thioadenosine + H2O + H(+) = S-methyl-5'-thioinosine + NH4(+). It carries out the reaction adenosine + H2O + H(+) = inosine + NH4(+). The protein operates within amino-acid biosynthesis; S-adenosyl-L-methionine biosynthesis. In terms of biological role, catalyzes the deamination of three SAM-derived enzymatic products, namely 5'-deoxyadenosine, S-adenosyl-L-homocysteine, and 5'-methylthioadenosine, to produce the inosine analogs. Can also deaminate adenosine. The preferred substrate for this enzyme is 5'-deoxyadenosine, but all these substrates are efficiently deaminated. Likely functions in a S-adenosyl-L-methionine (SAM) recycling pathway from S-adenosyl-L-homocysteine (SAH) produced from SAM-dependent methylation reactions. May also be involved in the recycling of 5'-deoxyadenosine, whereupon the 5'-deoxyribose moiety of 5'-deoxyinosine is further metabolized to deoxyhexoses used for the biosynthesis of aromatic amino acids in methanogens. In Methanocaldococcus jannaschii (strain ATCC 43067 / DSM 2661 / JAL-1 / JCM 10045 / NBRC 100440) (Methanococcus jannaschii), this protein is 5'-deoxyadenosine deaminase.